A 159-amino-acid polypeptide reads, in one-letter code: 2-C-methyl-D-erythritol 2,4-cyclodiphosphate synthase (159 aa).

A divalent metal cation-binding residues include D10 and H12. 4-CDP-2-C-methyl-D-erythritol 2-phosphate contacts are provided by residues 10-12 (DVH) and 36-37 (HS). H44 contacts a divalent metal cation. 4-CDP-2-C-methyl-D-erythritol 2-phosphate-binding positions include 58–60 (DIG), 134–137 (TTSE), F141, and R144.

The protein belongs to the IspF family. Homotrimer. Requires a divalent metal cation as cofactor.

The catalysed reaction is 4-CDP-2-C-methyl-D-erythritol 2-phosphate = 2-C-methyl-D-erythritol 2,4-cyclic diphosphate + CMP. It participates in isoprenoid biosynthesis; isopentenyl diphosphate biosynthesis via DXP pathway; isopentenyl diphosphate from 1-deoxy-D-xylulose 5-phosphate: step 4/6. Involved in the biosynthesis of isopentenyl diphosphate (IPP) and dimethylallyl diphosphate (DMAPP), two major building blocks of isoprenoid compounds. Catalyzes the conversion of 4-diphosphocytidyl-2-C-methyl-D-erythritol 2-phosphate (CDP-ME2P) to 2-C-methyl-D-erythritol 2,4-cyclodiphosphate (ME-CPP) with a corresponding release of cytidine 5-monophosphate (CMP). The protein is 2-C-methyl-D-erythritol 2,4-cyclodiphosphate synthase of Roseobacter denitrificans (strain ATCC 33942 / OCh 114) (Erythrobacter sp. (strain OCh 114)).